A 322-amino-acid polypeptide reads, in one-letter code: Acetyl-coenzyme A carboxylase carboxyl transferase subunit alpha (322 aa).

One can recognise a CoA carboxyltransferase C-terminal domain in the interval 39 to 293 (RLASKSQQLT…KRALAESLRQ (255 aa)).

The protein belongs to the AccA family. As to quaternary structure, acetyl-CoA carboxylase is a heterohexamer composed of biotin carboxyl carrier protein (AccB), biotin carboxylase (AccC) and two subunits each of ACCase subunit alpha (AccA) and ACCase subunit beta (AccD).

Its subcellular location is the cytoplasm. The enzyme catalyses N(6)-carboxybiotinyl-L-lysyl-[protein] + acetyl-CoA = N(6)-biotinyl-L-lysyl-[protein] + malonyl-CoA. The protein operates within lipid metabolism; malonyl-CoA biosynthesis; malonyl-CoA from acetyl-CoA: step 1/1. Its function is as follows. Component of the acetyl coenzyme A carboxylase (ACC) complex. First, biotin carboxylase catalyzes the carboxylation of biotin on its carrier protein (BCCP) and then the CO(2) group is transferred by the carboxyltransferase to acetyl-CoA to form malonyl-CoA. This chain is Acetyl-coenzyme A carboxylase carboxyl transferase subunit alpha, found in Ralstonia pickettii (strain 12J).